The chain runs to 630 residues: Phosphatidylinositol 4-kinase gamma 5 (630 aa).

The 58-residue stretch at 41-98 (RRVFVQTETGCVLGLELDRSDNAHTVKRKLQVALNFPIEESSLTFGDLVLKNDLTAVR) folds into the Ubiquitin-like; degenerate domain. One can recognise a PI3K/PI4K catalytic domain in the interval 162-459 (GIDPVAVNSG…LIGEKDAESP (298 aa)). Residues 168–174 (VNSGLGG) form a G-loop region. ATP contacts are provided by residues 169 to 175 (NSGLGGA), Lys190, and 279 to 282 (QQFI). The segment at 312–320 (LNTDRHSGN) is catalytic loop. The interval 339-365 (PIDHGLCLPETLEDPYFEWIHWPQASI) is activation loop. Residue Asp341 coordinates ATP. Positions 500 to 527 (LSKVEETTEDGEEEEEEDREEEENDRAD) are disordered. The segment covering 506–524 (TTEDGEEEEEEDREEEEND) has biased composition (acidic residues). Phosphoserine is present on Ser571.

The protein belongs to the PI3/PI4-kinase family. Type II PI4K subfamily. Interacts with AHK2.

It catalyses the reaction a 1,2-diacyl-sn-glycero-3-phospho-(1D-myo-inositol) + ATP = a 1,2-diacyl-sn-glycero-3-phospho-(1D-myo-inositol 4-phosphate) + ADP + H(+). Its function is as follows. The phosphorylation of phosphatidylinositol (PI) to PI4P is the first committed step in the generation of phosphatidylinositol 4,5-bisphosphate (PIP2), a precursor of the second messenger inositol 1,4,5-trisphosphate (InsP3). The chain is Phosphatidylinositol 4-kinase gamma 5 (PI4KG5) from Arabidopsis thaliana (Mouse-ear cress).